The chain runs to 697 residues: Elongation factor G (697 aa).

One can recognise a tr-type G domain in the interval 10 to 285; sequence AKTRNIGIMA…GVIDYLPSPL (276 aa). Residues 19-26, 83-87, and 137-140 each bind GTP; these read AHIDAGKT, DTPGH, and NKMD.

The protein belongs to the TRAFAC class translation factor GTPase superfamily. Classic translation factor GTPase family. EF-G/EF-2 subfamily.

The protein localises to the cytoplasm. Functionally, catalyzes the GTP-dependent ribosomal translocation step during translation elongation. During this step, the ribosome changes from the pre-translocational (PRE) to the post-translocational (POST) state as the newly formed A-site-bound peptidyl-tRNA and P-site-bound deacylated tRNA move to the P and E sites, respectively. Catalyzes the coordinated movement of the two tRNA molecules, the mRNA and conformational changes in the ribosome. This Lactobacillus helveticus (strain DPC 4571) protein is Elongation factor G.